The primary structure comprises 1242 residues: DNA-directed RNA polymerase RPB2 homolog (1242 aa).

Residues 1180 to 1201 (CRNCGEPAIYNASHPIYKCMNC) form a C4-type zinc finger.

This sequence belongs to the RNA polymerase beta chain family. In terms of assembly, part of the viral DNA-directed RNA polymerase that consists of 8 polII-like subunits (RPB1, RPB2, RPB3, RPB5, RPB6, RPB7, RPB9, RPB10), a capping enzyme and a termination factor.

It localises to the host cytoplasm. Its subcellular location is the virion. The catalysed reaction is RNA(n) + a ribonucleoside 5'-triphosphate = RNA(n+1) + diphosphate. Its function is as follows. Catalytic component of the DNA-directed RNA polymerase (RNAP) that catalyzes the transcription in the cytoplasm of viral DNA into RNA using the four ribonucleoside triphosphates as substrates. Forms the polymerase active center together with RPB1. Part of the core element with the central large cleft, the clamp element that moves to open and close the cleft and the jaws that are thought to grab the incoming DNA template. The protein is DNA-directed RNA polymerase RPB2 homolog of African swine fever virus (isolate Pig/Kenya/KEN-50/1950) (ASFV).